Here is a 496-residue protein sequence, read N- to C-terminus: Ankyrin repeat domain-containing protein 53 (496 aa).

The segment covering 1-15 has biased composition (low complexity); the sequence is MASAGSTARRAGSGS. Residues 1–66 are disordered; sequence MASAGSTARR…RPSEESDQTT (66 aa). Positions 51-60 are enriched in basic and acidic residues; the sequence is AESKQPRPSE. ANK repeat units follow at residues 105–135, 139–172, and 176–205; these read KGFTAIHFAAQRGKLACLQVLVEEYKFPVNL, NSQTPLHLVIHKDNTTVALPCIYYLLEKGAALNA, and NGCTPLHLAVREGLLDCVKVLVQSGANVHA. A disordered region spans residues 292-320; the sequence is LVSNTKQARATALSKTPEQRGSQCSSSFH.

As to quaternary structure, interacts with PSRC1; recruited by PSRC1 to the spindle during mitosis. Post-translationally, phosphorylated during mitosis.

Its subcellular location is the cytoplasm. It is found in the cytoskeleton. The protein localises to the spindle. It localises to the spindle pole. In terms of biological role, required for normal progression through mitosis. Involved in chromosome alignment and cytokinesis via regulation of microtubules polymerization. The sequence is that of Ankyrin repeat domain-containing protein 53 (ANKRD53) from Macaca fascicularis (Crab-eating macaque).